The primary structure comprises 259 residues: MATRRALKAVLVDLSGTLHIEDAAVPGAQEALKRLRATSVMVRFVTNTTKESKQDLLERLKKLEFDISEDEIFTSLTAARNLVEQKQVRPMLLVDDRALPDFKGIQTSDPNAVVIGLAPEHFHYQILNQAFRLLLDGAPLIAIHKARYYKRKDGLALGPGPFVTALEYATDTKATVVGKPEKTFFLEALRGTGCEPEETVMIGDDCRDDVGGAQNAGMRGILVKTGKYRAADEDKINPAPYLTCESFPHAVDHILQHLL.

Mg(2+) is bound by residues D13 and S15. Substrate contacts are provided by residues 13 to 15 and 46 to 47; these read DLS and TN. The stretch at 47–71 forms a coiled coil; sequence NTTKESKQDLLERLKKLEFDISEDE. Residue K50 is modified to N6-succinyllysine. A substrate-binding site is contributed by K179. D204 contributes to the Mg(2+) binding site.

Belongs to the HAD-like hydrolase superfamily. It depends on Mg(2+) as a cofactor.

In Bos taurus (Bovine), this protein is Haloacid dehalogenase-like hydrolase domain-containing protein 2 (HDHD2).